Here is a 141-residue protein sequence, read N- to C-terminus: Lutropin subunit beta (141 aa).

The signal sequence occupies residues 1–20 (MEMLQGLLLWLLLSMGGARA). Disulfide bonds link Cys29/Cys77, Cys43/Cys92, Cys46/Cys130, Cys54/Cys108, Cys58/Cys110, and Cys113/Cys120. N-linked (GlcNAc...) asparagine glycans are attached at residues Asn33 and Asn50.

This sequence belongs to the glycoprotein hormones subunit beta family. Heterodimer of a common alpha chain and a unique beta chain which confers biological specificity to thyrotropin, lutropin, follitropin and gonadotropin.

It localises to the secreted. In terms of biological role, promotes spermatogenesis and ovulation by stimulating the testes and ovaries to synthesize steroids. The chain is Lutropin subunit beta (LHB) from Macaca fascicularis (Crab-eating macaque).